The following is a 276-amino-acid chain: Bis(5'-nucleosyl)-tetraphosphatase, symmetrical (276 aa).

This sequence belongs to the Ap4A hydrolase family.

The enzyme catalyses P(1),P(4)-bis(5'-adenosyl) tetraphosphate + H2O = 2 ADP + 2 H(+). Hydrolyzes diadenosine 5',5'''-P1,P4-tetraphosphate to yield ADP. This chain is Bis(5'-nucleosyl)-tetraphosphatase, symmetrical, found in Dechloromonas aromatica (strain RCB).